The following is a 385-amino-acid chain: MRESTLMEKVTRRTISSFIFFIVSSTILFLAGKSSAKISHNGDNNVTALFLFGDSFLDAGNNNYINTTTLDQANFPPYGQTFFGLPTGRFSDGRLISDFIAEYANLPLIPPFLEPGNSQKKLYGVNFASAGAGALVETFQGSVINLRTQLDHYKKVERLWRTNFGKEESKKRISRAVYLISIGSNDYSSIFLTNQSLPISMSQHVDIVIGNLTTFIHEIYKIGGRKFGFLNVPDLGCFPALRILQPKNDDSCLRDASRLASMHNRALTNLLFQMQRQVKGFKFSLFDMNKSLRLRMQHPSKFGFKEGEEACCGTGKWRGVFSCGGKRIVKEYQLCENPKDYIFWDSLHLTQNTYNQFANLIWNGGHMSDSLVVGPYNINNLFQIP.

A signal peptide spans 1 to 35 (MRESTLMEKVTRRTISSFIFFIVSSTILFLAGKSS). The N-linked (GlcNAc...) asparagine glycan is linked to Asn-45. Ser-55 acts as the Nucleophile in catalysis. Asn-66, Asn-194, Asn-211, and Asn-289 each carry an N-linked (GlcNAc...) asparagine glycan. Catalysis depends on residues Asp-345 and His-348.

It belongs to the 'GDSL' lipolytic enzyme family.

Its subcellular location is the secreted. This is GDSL esterase/lipase 5 (GLIP5) from Arabidopsis thaliana (Mouse-ear cress).